A 367-amino-acid chain; its full sequence is Fructose-1,6-bisphosphatase class 1 3 (367 aa).

Belongs to the FBPase class 1 family. Homotetramer.

The protein resides in the cytoplasm. It catalyses the reaction beta-D-fructose 1,6-bisphosphate + H2O = beta-D-fructose 6-phosphate + phosphate. It participates in carbohydrate biosynthesis; gluconeogenesis. The chain is Fructose-1,6-bisphosphatase class 1 3 from Paraburkholderia phymatum (strain DSM 17167 / CIP 108236 / LMG 21445 / STM815) (Burkholderia phymatum).